The sequence spans 234 residues: Tissue factor pathway inhibitor 2 (234 aa).

Positions 1-22 are cleaved as a signal peptide; that stretch reads MDSVRPLWLMLLSLLLVGTALG. BPTI/Kunitz inhibitor domains follow at residues 36-86, 96-146, and 155-205; these read CLLP…NEAC, CRLK…MDFC, and CYSP…KRTC. Disulfide bonds link C36-C86, C45-C69, C61-C82, C96-C146, C105-C129, C121-C142, C155-C205, C164-C188, and C180-C201. Residue N115 is glycosylated (N-linked (GlcNAc...) asparagine). N-linked (GlcNAc...) asparagine glycans are attached at residues N167 and N184.

Finds in a complex with ABCB1, TFPI2 and PPP2R3C; leading to the dephosphorylation of ABCB1.

Its subcellular location is the secreted. Functionally, may play a role in the regulation of plasmin-mediated matrix remodeling. Inhibits trypsin, plasmin, factor VIIa/tissue factor and weakly factor Xa. Has no effect on thrombin. This chain is Tissue factor pathway inhibitor 2 (TFPI2), found in Bos taurus (Bovine).